A 1349-amino-acid polypeptide reads, in one-letter code: ABC multidrug transporter mdr1 (1349 aa).

Positions M1–K62 are disordered. Residues D35–L45 show a composition bias toward basic and acidic residues. A run of 4 helical transmembrane segments spans residues I108–F128, Y162–I182, K234–V254, and W257–G277. One can recognise an ABC transmembrane type-1 1 domain in the interval L112–N402. N-linked (GlcNAc...) asparagine glycosylation is present at N308. 2 helical membrane-spanning segments follow: residues I339–F359 and V371–G391. The ABC transporter 1 domain maps to I437–A682. An ATP-binding site is contributed by G472–S479. 2 helical membrane passes run M779–L799 and F828–I848. The region spanning L780 to K1069 is the ABC transmembrane type-1 2 domain. Residues N878 and N893 are each glycosylated (N-linked (GlcNAc...) asparagine). 4 helical membrane passes run G896–M916, L926–L948, A1016–H1036, and F1043–F1063. Residues I1104 to L1342 form the ABC transporter 2 domain. N-linked (GlcNAc...) asparagine glycosylation occurs at N1126. Residue G1139–S1146 participates in ATP binding.

The protein belongs to the ABC transporter superfamily. ABCB family. Multidrug resistance exporter (TC 3.A.1.201) subfamily.

The protein resides in the cell membrane. The catalysed reaction is voriconazole(in) + ATP + H2O = voriconazole(out) + ADP + phosphate + H(+). In terms of biological role, pleiotropic ABC efflux transporter that may be involved in A.fumigatus adaptation to azoles such as vorizonazole. The protein is ABC multidrug transporter mdr1 of Aspergillus fumigatus (strain ATCC MYA-4609 / CBS 101355 / FGSC A1100 / Af293) (Neosartorya fumigata).